Reading from the N-terminus, the 490-residue chain is tRNA-2-methylthio-N(6)-dimethylallyladenosine synthase (490 aa).

The region spanning 37 to 154 (KKVYIATQGC…LPELYDKSTT (118 aa)) is the MTTase N-terminal domain. Positions 46, 83, 117, 198, 202, and 205 each coordinate [4Fe-4S] cluster. A Radical SAM core domain is found at 184 to 416 (KVEGYRAFVS…QKVIRDSTLK (233 aa)). The 69-residue stretch at 419–487 (EEMVGKTLRV…PHMVRGELVD (69 aa)) folds into the TRAM domain.

It belongs to the methylthiotransferase family. MiaB subfamily. Monomer. [4Fe-4S] cluster is required as a cofactor.

It is found in the cytoplasm. It carries out the reaction N(6)-dimethylallyladenosine(37) in tRNA + (sulfur carrier)-SH + AH2 + 2 S-adenosyl-L-methionine = 2-methylsulfanyl-N(6)-dimethylallyladenosine(37) in tRNA + (sulfur carrier)-H + 5'-deoxyadenosine + L-methionine + A + S-adenosyl-L-homocysteine + 2 H(+). Its function is as follows. Catalyzes the methylthiolation of N6-(dimethylallyl)adenosine (i(6)A), leading to the formation of 2-methylthio-N6-(dimethylallyl)adenosine (ms(2)i(6)A) at position 37 in tRNAs that read codons beginning with uridine. The protein is tRNA-2-methylthio-N(6)-dimethylallyladenosine synthase of Psychrobacter sp. (strain PRwf-1).